We begin with the raw amino-acid sequence, 337 residues long: Ketol-acid reductoisomerase (NADP(+)) (337 aa).

Residues 3-183 (VEMFYDDDAD…GGARAGVIKT (181 aa)) enclose the KARI N-terminal Rossmann domain. NADP(+) contacts are provided by residues 26-29 (YGSQ), lysine 49, serine 52, serine 54, and 84-87 (DTAQ). Histidine 109 is a catalytic residue. NADP(+) is bound at residue glycine 135. The KARI C-terminal knotted domain maps to 184–329 (TFKEETETDL…KKLRDLMSWV (146 aa)). Mg(2+)-binding residues include aspartate 192, glutamate 196, glutamate 228, and glutamate 232. Substrate is bound at residue serine 253.

The protein belongs to the ketol-acid reductoisomerase family. It depends on Mg(2+) as a cofactor.

The enzyme catalyses (2R)-2,3-dihydroxy-3-methylbutanoate + NADP(+) = (2S)-2-acetolactate + NADPH + H(+). The catalysed reaction is (2R,3R)-2,3-dihydroxy-3-methylpentanoate + NADP(+) = (S)-2-ethyl-2-hydroxy-3-oxobutanoate + NADPH + H(+). Its pathway is amino-acid biosynthesis; L-isoleucine biosynthesis; L-isoleucine from 2-oxobutanoate: step 2/4. It participates in amino-acid biosynthesis; L-valine biosynthesis; L-valine from pyruvate: step 2/4. In terms of biological role, involved in the biosynthesis of branched-chain amino acids (BCAA). Catalyzes an alkyl-migration followed by a ketol-acid reduction of (S)-2-acetolactate (S2AL) to yield (R)-2,3-dihydroxy-isovalerate. In the isomerase reaction, S2AL is rearranged via a Mg-dependent methyl migration to produce 3-hydroxy-3-methyl-2-ketobutyrate (HMKB). In the reductase reaction, this 2-ketoacid undergoes a metal-dependent reduction by NADPH to yield (R)-2,3-dihydroxy-isovalerate. The chain is Ketol-acid reductoisomerase (NADP(+)) from Rhodococcus opacus (strain B4).